A 129-amino-acid polypeptide reads, in one-letter code: Small ribosomal subunit protein uS11 (129 aa).

The protein belongs to the universal ribosomal protein uS11 family. In terms of assembly, part of the 30S ribosomal subunit. Interacts with proteins S7 and S18. Binds to IF-3.

Its function is as follows. Located on the platform of the 30S subunit, it bridges several disparate RNA helices of the 16S rRNA. Forms part of the Shine-Dalgarno cleft in the 70S ribosome. The chain is Small ribosomal subunit protein uS11 from Bacillus cereus (strain ATCC 14579 / DSM 31 / CCUG 7414 / JCM 2152 / NBRC 15305 / NCIMB 9373 / NCTC 2599 / NRRL B-3711).